The primary structure comprises 383 residues: Lipoyl synthase, mitochondrial (383 aa).

A mitochondrion-targeting transit peptide spans 1–19; that stretch reads MHASTLTRCMRVAQNARCL. Residues 69-97 form a disordered region; the sequence is DAAPGTKPSRKPNASNRKPKWLKAQPTQG. The [4Fe-4S] cluster site is built by Cys116, Cys121, Cys127, Cys147, Cys151, Cys154, and Ser362. Positions 132–351 constitute a Radical SAM core domain; sequence KDGIATATIM…QKVAEQMGFL (220 aa).

It belongs to the radical SAM superfamily. Lipoyl synthase family. [4Fe-4S] cluster is required as a cofactor.

The protein resides in the mitochondrion. It catalyses the reaction [[Fe-S] cluster scaffold protein carrying a second [4Fe-4S](2+) cluster] + N(6)-octanoyl-L-lysyl-[protein] + 2 oxidized [2Fe-2S]-[ferredoxin] + 2 S-adenosyl-L-methionine + 4 H(+) = [[Fe-S] cluster scaffold protein] + N(6)-[(R)-dihydrolipoyl]-L-lysyl-[protein] + 4 Fe(3+) + 2 hydrogen sulfide + 2 5'-deoxyadenosine + 2 L-methionine + 2 reduced [2Fe-2S]-[ferredoxin]. Its pathway is protein modification; protein lipoylation via endogenous pathway; protein N(6)-(lipoyl)lysine from octanoyl-[acyl-carrier-protein]: step 2/2. Functionally, catalyzes the radical-mediated insertion of two sulfur atoms into the C-6 and C-8 positions of the octanoyl moiety bound to the lipoyl domains of lipoate-dependent enzymes, thereby converting the octanoylated domains into lipoylated derivatives. This chain is Lipoyl synthase, mitochondrial, found in Phytophthora infestans (strain T30-4) (Potato late blight agent).